The sequence spans 246 residues: Serine protease 1 (246 aa).

The first 15 residues, 1–15, serve as a signal peptide directing secretion; that stretch reads MKTFIFLALLGATVA. A propeptide spans 16-23 (activation peptide); it reads FPIDDDDK. One can recognise a Peptidase S1 domain in the interval 24–244; sequence IVGGYTCSRN…YVSWIQQTIA (221 aa). 6 disulfides stabilise this stretch: Cys-30–Cys-160, Cys-48–Cys-64, Cys-132–Cys-233, Cys-139–Cys-206, Cys-171–Cys-185, and Cys-196–Cys-220. His-63 functions as the Charge relay system in the catalytic mechanism. 4 residues coordinate Ca(2+): Glu-75, Asn-77, Val-80, and Glu-85. Catalysis depends on Asp-107, which acts as the Charge relay system. Catalysis depends on Ser-200, which acts as the Charge relay system.

It belongs to the peptidase S1 family. In terms of assembly, interacts with SERPINA1. The cofactor is Ca(2+).

The protein resides in the secreted. It is found in the extracellular space. It catalyses the reaction Preferential cleavage: Arg-|-Xaa, Lys-|-Xaa.. The polypeptide is Serine protease 1 (Canis lupus familiaris (Dog)).